Reading from the N-terminus, the 421-residue chain is Serine hydroxymethyltransferase (421 aa).

Residues L118 and 122–124 (GHL) contribute to the (6S)-5,6,7,8-tetrahydrofolate site. An N6-(pyridoxal phosphate)lysine modification is found at K226. E242 lines the (6S)-5,6,7,8-tetrahydrofolate pocket.

It belongs to the SHMT family. As to quaternary structure, homodimer. It depends on pyridoxal 5'-phosphate as a cofactor.

Its subcellular location is the cytoplasm. It catalyses the reaction (6R)-5,10-methylene-5,6,7,8-tetrahydrofolate + glycine + H2O = (6S)-5,6,7,8-tetrahydrofolate + L-serine. Its pathway is one-carbon metabolism; tetrahydrofolate interconversion. It functions in the pathway amino-acid biosynthesis; glycine biosynthesis; glycine from L-serine: step 1/1. Its function is as follows. Catalyzes the reversible interconversion of serine and glycine with tetrahydrofolate (THF) serving as the one-carbon carrier. This reaction serves as the major source of one-carbon groups required for the biosynthesis of purines, thymidylate, methionine, and other important biomolecules. Also exhibits THF-independent aldolase activity toward beta-hydroxyamino acids, producing glycine and aldehydes, via a retro-aldol mechanism. The sequence is that of Serine hydroxymethyltransferase from Mycoplasmopsis synoviae (strain 53) (Mycoplasma synoviae).